The sequence spans 136 residues: Holo-[acyl-carrier-protein] synthase (136 aa).

Mg(2+) contacts are provided by D8 and E58.

This sequence belongs to the P-Pant transferase superfamily. AcpS family. Requires Mg(2+) as cofactor.

Its subcellular location is the cytoplasm. It carries out the reaction apo-[ACP] + CoA = holo-[ACP] + adenosine 3',5'-bisphosphate + H(+). In terms of biological role, transfers the 4'-phosphopantetheine moiety from coenzyme A to a Ser of acyl-carrier-protein. The protein is Holo-[acyl-carrier-protein] synthase of Leuconostoc mesenteroides subsp. mesenteroides (strain ATCC 8293 / DSM 20343 / BCRC 11652 / CCM 1803 / JCM 6124 / NCDO 523 / NBRC 100496 / NCIMB 8023 / NCTC 12954 / NRRL B-1118 / 37Y).